Reading from the N-terminus, the 270-residue chain is UPF0354 protein BT9727_4425 (270 aa).

Belongs to the UPF0354 family.

This chain is UPF0354 protein BT9727_4425, found in Bacillus thuringiensis subsp. konkukian (strain 97-27).